Reading from the N-terminus, the 188-residue chain is Phosphoribosylglycinamide formyltransferase (188 aa).

12 to 14 (GSN) is a N(1)-(5-phospho-beta-D-ribosyl)glycinamide binding site. Residues Lys66, 91–94 (MRLI), and Asn108 contribute to the (6R)-10-formyltetrahydrofolate site. The active-site Proton donor is the His110.

The protein belongs to the GART family.

The enzyme catalyses N(1)-(5-phospho-beta-D-ribosyl)glycinamide + (6R)-10-formyltetrahydrofolate = N(2)-formyl-N(1)-(5-phospho-beta-D-ribosyl)glycinamide + (6S)-5,6,7,8-tetrahydrofolate + H(+). Its pathway is purine metabolism; IMP biosynthesis via de novo pathway; N(2)-formyl-N(1)-(5-phospho-D-ribosyl)glycinamide from N(1)-(5-phospho-D-ribosyl)glycinamide (10-formyl THF route): step 1/1. In terms of biological role, catalyzes the transfer of a formyl group from 10-formyltetrahydrofolate to 5-phospho-ribosyl-glycinamide (GAR), producing 5-phospho-ribosyl-N-formylglycinamide (FGAR) and tetrahydrofolate. This chain is Phosphoribosylglycinamide formyltransferase, found in Staphylococcus aureus (strain MSSA476).